A 296-amino-acid polypeptide reads, in one-letter code: Probable redox regulatory protein BQ2027_MB0506C (296 aa).

Belongs to the Rv0495c family.

Functionally, essential for maintaining intracellular redox homeostasis. The protein is Probable redox regulatory protein BQ2027_MB0506C of Mycobacterium bovis (strain ATCC BAA-935 / AF2122/97).